The primary structure comprises 1368 residues: Mediator of RNA polymerase II transcription subunit 23 (1368 aa).

The segment at 1343–1368 (VPPQAMNSGSPAPQSNQVPVSLPVTQ) is disordered. The span at 1347–1368 (AMNSGSPAPQSNQVPVSLPVTQ) shows a compositional bias: polar residues.

Belongs to the Mediator complex subunit 23 family. Interacts with ELK1. Component of the Mediator complex, which is composed of MED1, MED4, MED6, MED7, MED8, MED9, MED10, MED11, MED12, MED13, MED13L, MED14, MED15, MED16, MED17, MED18, MED19, MED20, MED21, MED22, MED23, MED24, MED25, MED26, MED27, MED29, MED30, MED31, CCNC, CDK8 and CDC2L6/CDK11. The MED12, MED13, CCNC and CDK8 subunits form a distinct module termed the CDK8 module. Mediator containing the CDK8 module is less active than Mediator lacking this module in supporting transcriptional activation. Individual preparations of the Mediator complex lacking one or more distinct subunits have been variously termed ARC, CRSP, DRIP, PC2, SMCC and TRAP. Interacts with CEBPB (when not methylated), CTNNB1, and GLI3. Interacts with the adenovirus E1A protein.

It is found in the nucleus. In terms of biological role, required for transcriptional activation subsequent to the assembly of the pre-initiation complex. Component of the Mediator complex, a coactivator involved in the regulated transcription of nearly all RNA polymerase II-dependent genes. Mediator functions as a bridge to convey information from gene-specific regulatory proteins to the basal RNA polymerase II transcription machinery. Mediator is recruited to promoters by direct interactions with regulatory proteins and serves as a scaffold for the assembly of a functional pre-initiation complex with RNA polymerase II and the general transcription factors. Required for transcriptional activation by adenovirus E1A protein. Required for ELK1-dependent transcriptional activation in response to activated Ras signaling. The chain is Mediator of RNA polymerase II transcription subunit 23 (MED23) from Homo sapiens (Human).